Here is a 291-residue protein sequence, read N- to C-terminus: 3-methyl-2-oxobutanoate hydroxymethyltransferase (291 aa).

The span at 1–10 shows a compositional bias: polar residues; sequence MTQLSAAQTP. Residues 1 to 20 form a disordered region; sequence MTQLSAAQTPQPKPADGNRA. Residues aspartate 71 and aspartate 110 each contribute to the Mg(2+) site. Residues 71 to 72, aspartate 110, and lysine 140 each bind 3-methyl-2-oxobutanoate; that span reads DS. Position 142 (glutamate 142) interacts with Mg(2+). The active-site Proton acceptor is the glutamate 208.

This sequence belongs to the PanB family. In terms of assembly, homodecamer; pentamer of dimers. The cofactor is Mg(2+).

The protein resides in the cytoplasm. The catalysed reaction is 3-methyl-2-oxobutanoate + (6R)-5,10-methylene-5,6,7,8-tetrahydrofolate + H2O = 2-dehydropantoate + (6S)-5,6,7,8-tetrahydrofolate. Its pathway is cofactor biosynthesis; (R)-pantothenate biosynthesis; (R)-pantoate from 3-methyl-2-oxobutanoate: step 1/2. Its function is as follows. Catalyzes the reversible reaction in which hydroxymethyl group from 5,10-methylenetetrahydrofolate is transferred onto alpha-ketoisovalerate to form ketopantoate. This is 3-methyl-2-oxobutanoate hydroxymethyltransferase from Streptomyces coelicolor (strain ATCC BAA-471 / A3(2) / M145).